A 223-amino-acid polypeptide reads, in one-letter code: uncharacterized protein (223 aa).

Positions 1 to 11 are enriched in basic residues; it reads MLWVQRKRRRK. A disordered region spans residues 1–37; it reads MLWVQRKRRRKETSECPSDKDKSPESHKAKNESWIKS. The segment covering 12 to 37 has biased composition (basic and acidic residues); that stretch reads ETSECPSDKDKSPESHKAKNESWIKS. A Phosphoserine modification is found at serine 43. 2 disordered regions span residues 49 to 73 and 196 to 223; these read LDNN…SSTV and THTF…NRRH. Residues 51–61 show a composition bias toward polar residues; it reads NNASASGNATQ. Residues 62–73 are compositionally biased toward low complexity; sequence TESGSEEVSSTV. Residues 202–223 are compositionally biased toward basic residues; sequence HSHHSHHGHPSHQSHSLPNRRH.

This is an uncharacterized protein from Homo sapiens (Human).